Consider the following 88-residue polypeptide: UPF0335 protein WRi_003770 (88 aa).

It belongs to the UPF0335 family.

The protein is UPF0335 protein WRi_003770 of Wolbachia sp. subsp. Drosophila simulans (strain wRi).